An 84-amino-acid chain; its full sequence is Beta-cardiotoxin CTX21 (84 aa).

The first 21 residues, 1 to 21 (MKTLLLTLVVVTIVCLDLGYT), serve as a signal peptide directing secretion. 4 cysteine pairs are disulfide-bonded: Cys24–Cys43, Cys36–Cys61, Cys65–Cys76, and Cys77–Cys82.

The protein belongs to the three-finger toxin family. Short-chain subfamily. Aminergic toxin sub-subfamily. As to expression, expressed by the venom gland.

The protein resides in the secreted. Acts as a beta-blocker by binding to beta-1 and beta-2 adrenergic receptors (ADRB1 and ADRB2). It dose-dependently decreases the heart rate (bradycardia), whereas conventional cardiotoxins increases it. At 100 mg/kg, intraperitoneal injection into mice provokes labored breathing, impaired locomotion, lack of response to external stimuli, and death (after 30 minutes). This chain is Beta-cardiotoxin CTX21, found in Ophiophagus hannah (King cobra).